Reading from the N-terminus, the 443-residue chain is C4-dicarboxylate transport protein (443 aa).

7 helical membrane passes run 7 to 26, 46 to 63, 76 to 98, 140 to 162, 183 to 205, 218 to 240, and 350 to 372; these read SLYV…GALF, MVIA…VAHM, ALIY…MNVL, LVSA…FGFA, VVFV…AMAF, LGYL…LGLI, and FITL…ALIL. The disordered stretch occupies residues 415–443; it reads GEDLPTTEPDVASEERGEGREIDSSRPVT. The segment covering 427–443 has biased composition (basic and acidic residues); that stretch reads SEERGEGREIDSSRPVT.

It belongs to the dicarboxylate/amino acid:cation symporter (DAACS) (TC 2.A.23) family.

Its subcellular location is the cell membrane. Responsible for the transport of dicarboxylates such as succinate, fumarate, and malate across the membrane. This Deinococcus radiodurans (strain ATCC 13939 / DSM 20539 / JCM 16871 / CCUG 27074 / LMG 4051 / NBRC 15346 / NCIMB 9279 / VKM B-1422 / R1) protein is C4-dicarboxylate transport protein (dctA).